Reading from the N-terminus, the 310-residue chain is Flavin-dependent trigonelline monooxygenase, reductase component (310 aa).

FMN is bound by residues 40–43 (TANS), 57–63 (SIAKTSS), 90–91 (FA), and Arg-97.

Belongs to the non-flavoprotein flavin reductase family. In terms of assembly, homodimer. The trigonelline monooxygenase is composed of a reductase component TgnA and an oxygenase component TgnB.

The enzyme catalyses a reduced flavin + NAD(+) = an oxidized flavin + NADH + 2 H(+). It catalyses the reaction FADH2 + NAD(+) = FAD + NADH + 2 H(+). The catalysed reaction is FMNH2 + NAD(+) = FMN + NADH + 2 H(+). Its activity is regulated as follows. Maximal reductase activity is achieved only upon trigonelline (TG) binding to the reductase component before interaction with NADH. It seems that TgnA undergoes an allosteric transition upon trigonelline (TG) binding accounting for the positive cooperativity toward NADH oxidation. Its function is as follows. Involved in the degradation of the pyridine ring of trigonelline (TG; N-methylnicotinate) into succinate and methylamine as carbon and nitrogen sources, respectively. TgnA catalyzes the reduction of flavin (FMN or FAD) by NADH and supplies the reduced flavin to the oxygenase component TgnB. This Acinetobacter baylyi (strain ATCC 33305 / BD413 / ADP1) protein is Flavin-dependent trigonelline monooxygenase, reductase component.